Here is a 153-residue protein sequence, read N- to C-terminus: UPF0178 protein Sfum_1097 (153 aa).

This sequence belongs to the UPF0178 family.

The protein is UPF0178 protein Sfum_1097 of Syntrophobacter fumaroxidans (strain DSM 10017 / MPOB).